The sequence spans 401 residues: Acetate kinase (401 aa).

Position 10 (Asn10) interacts with Mg(2+). Residue Lys17 participates in ATP binding. Residue Arg91 coordinates substrate. Asp150 (proton donor/acceptor) is an active-site residue. ATP-binding positions include 210-214, 285-287, and 333-337; these read HLGNG, DCR, and GIGEN. A Mg(2+)-binding site is contributed by Glu387.

Belongs to the acetokinase family. In terms of assembly, homodimer. The cofactor is Mg(2+). Requires Mn(2+) as cofactor.

It localises to the cytoplasm. It carries out the reaction acetate + ATP = acetyl phosphate + ADP. The protein operates within metabolic intermediate biosynthesis; acetyl-CoA biosynthesis; acetyl-CoA from acetate: step 1/2. In terms of biological role, catalyzes the formation of acetyl phosphate from acetate and ATP. Can also catalyze the reverse reaction. This chain is Acetate kinase, found in Pasteurella multocida (strain Pm70).